Here is a 572-residue protein sequence, read N- to C-terminus: Na(+)/citrate cotransporter (572 aa).

8 helical membrane-spanning segments follow: residues 13 to 33, 53 to 73, 80 to 100, 124 to 144, 218 to 238, 255 to 275, 315 to 335, and 357 to 377; these read SFVI…LVPD, VIPV…LKVL, VQYM…ATAV, LMLG…NTAT, AASI…VLLG, SWFA…WLWL, PLSY…ILWF, and HVTD…VPSQ. An N-linked (GlcNAc...) asparagine glycan is attached at Asn382. Transmembrane regions (helical) follow at residues 410-430, 443-463, 491-511, and 532-552; these read VPWG…GCET, PLSS…VAMT, PLYV…LPVA, and TGLV…NTWG. N-linked (GlcNAc...) asparagine glycosylation is present at Asn566.

The protein belongs to the SLC13A/DASS transporter (TC 2.A.47) family. NADC subfamily. Homodimer. As to expression, expressed in liver, testis and brain.

The protein resides in the cell membrane. The catalysed reaction is citrate(out) + 4 Na(+)(out) = citrate(in) + 4 Na(+)(in). Its activity is regulated as follows. Inhibited by Li(+). Its function is as follows. High-affinity sodium/citrate cotransporter that mediates citrate entry into cells, which is a critical participant of biochemical pathways. May function in various metabolic processes in which citrate has a critical role such as energy production (Krebs cycle), fatty acid synthesis, cholesterol synthesis, glycolysis, and gluconeogenesis. Transports citrate into the cell in a Na(+)-dependent manner, recognizing the trivalent form of citrate (physiological pH) rather than the divalent form. Can recognize succinate as a substrate, but its affinity for succinate is several fold lower than for citrate. The stoichiometry is probably 4 Na(+) for each carboxylate, irrespective of whether the translocated substrate is divalent or trivalent, rendering the process electrogenic. Involved in the regulation of citrate levels in the brain. The protein is Na(+)/citrate cotransporter (Slc13a5) of Rattus norvegicus (Rat).